A 254-amino-acid polypeptide reads, in one-letter code: uncharacterized protein (254 aa).

This is an uncharacterized protein from Aedes vexans (Inland floodwater mosquito).